We begin with the raw amino-acid sequence, 548 residues long: 5-epi-aristolochene synthase 1 (548 aa).

Mg(2+)-binding residues include aspartate 301, aspartate 305, aspartate 444, threonine 448, and glutamate 452. The DDXXD motif signature appears at 301–305 (DDTFD).

This sequence belongs to the terpene synthase family. In terms of assembly, monomer. Mg(2+) serves as cofactor. Expressed in roots, but not in shoots.

The protein localises to the cytoplasm. It carries out the reaction (2E,6E)-farnesyl diphosphate = (+)-5-epi-aristolochene + diphosphate. Its pathway is secondary metabolite biosynthesis; terpenoid biosynthesis. Catalyzes the cyclization of trans,trans-farnesyl diphosphate (FPP) to the bicyclic intermediate 5-epi-aristolochene, initial step in the conversion of FPP to the sesquiterpenoid antifungal phytoalexin capsidiol. Produces germacrene A as an enzyme-bound intermediate that is not released by the enzyme, but is further cyclized to produce the bicyclic 5-epi-aristolochene. This chain is 5-epi-aristolochene synthase 1 (EAS), found in Nicotiana attenuata (Coyote tobacco).